The following is a 646-amino-acid chain: MMNKWAKNWFGLSKKSVSTNSAKGSLPRSPLASIQTNQPVEEGEGGSLPSVSNLGPSSIDHPMEEFASDQSTVGNRNSNDILPEVDHEPSGYLKLQIGSLVLGGPHTDAALAMECSRLNQLFVVVQFGTTEFVSPPLKWESPGRDIGTSSRDSANVSRSSSMMSSHPIPTPAIQRTSSIPNPLTPSYVVFDVAKPVPIDVNIYDHGNNNEFVGRTYIHPSYNYGQFEQFCNSVEVSPAYNRMVDLRLSLNTVFQPLSQHSYGPDDFVPLKLIGKGTFGQVYLVRKKDTERVYAMKVLSKKVIVRRKEVAHTVGERDILVQTSAADSPFIVALRFSFQTPKDLYLVTDYMAGGELFWHLQKSVRFPEERAKFYIAELLLALQALHKRGIVYRDLKPENILLDVQGHIALCDFGLSKANLSVGTTTRTFCGTTDYLAPEVILDEAGYDMMVDFWSLGVLLYEMTCGWSPFYADNTQQLYKNIVFGKVRFPRGLLSVEARDLIKLLLNRNPKHRLGAHGDVEEVMKHPFFDGIDWKKLAAKEISPPFKPIVEGEIDVSNFDVEFTNKAIDRDFSSTDEMSTSAPLSSTVQNGFKGFTYIDASAMDEAFGYHNSNDSASSISSQDDYSKDNSDMDLNRANDEVFMGQIDP.

2 disordered regions span residues 17 to 85 (VSTN…LPEV) and 143 to 176 (GRDI…IQRT). A compositionally biased stretch (polar residues) spans 68–80 (SDQSTVGNRNSND). The segment covering 149–165 (SSRDSANVSRSSSMMSS) has biased composition (low complexity). The region spanning 266–527 (FVPLKLIGKG…VEEVMKHPFF (262 aa)) is the Protein kinase domain. Residues 272–280 (IGKGTFGQV) and Lys-295 each bind ATP. Asp-392 functions as the Proton acceptor in the catalytic mechanism. The 78-residue stretch at 528–605 (DGIDWKKLAA…IDASAMDEAF (78 aa)) folds into the AGC-kinase C-terminal domain. Residues 609 to 646 (NSNDSASSISSQDDYSKDNSDMDLNRANDEVFMGQIDP) form a disordered region. Over residues 610 to 621 (SNDSASSISSQD) the composition is skewed to low complexity. Positions 622–637 (DYSKDNSDMDLNRAND) are enriched in basic and acidic residues.

The protein belongs to the protein kinase superfamily. AGC Ser/Thr protein kinase family. PKC subfamily.

It carries out the reaction L-seryl-[protein] + ATP = O-phospho-L-seryl-[protein] + ADP + H(+). The catalysed reaction is L-threonyl-[protein] + ATP = O-phospho-L-threonyl-[protein] + ADP + H(+). Its function is as follows. Protein kinase that is part of growth control pathway which is at least partially redundant with the cAMP pathway. The polypeptide is Serine/threonine-protein kinase sck2 (sck2) (Schizosaccharomyces pombe (strain 972 / ATCC 24843) (Fission yeast)).